We begin with the raw amino-acid sequence, 706 residues long: Elongation factor G (706 aa).

Residues 15–291 (LKTRNIGISA…GVLDYLASPV (277 aa)) form the tr-type G domain. Residues 24–31 (AHIDSGKT), 91–95 (DTPGH), and 145–148 (NKLD) each bind GTP.

Belongs to the TRAFAC class translation factor GTPase superfamily. Classic translation factor GTPase family. EF-G/EF-2 subfamily.

It localises to the cytoplasm. In terms of biological role, catalyzes the GTP-dependent ribosomal translocation step during translation elongation. During this step, the ribosome changes from the pre-translocational (PRE) to the post-translocational (POST) state as the newly formed A-site-bound peptidyl-tRNA and P-site-bound deacylated tRNA move to the P and E sites, respectively. Catalyzes the coordinated movement of the two tRNA molecules, the mRNA and conformational changes in the ribosome. The sequence is that of Elongation factor G from Leptospira borgpetersenii serovar Hardjo-bovis (strain L550).